A 985-amino-acid chain; its full sequence is Regulator of telomere elongation helicase 1 homolog (985 aa).

One can recognise a Helicase ATP-binding domain in the interval A7 to D303. S42–T49 is an ATP binding site. 4 residues coordinate [4Fe-4S] cluster: C146, C164, C173, and C209. A DEAH box motif is present at residues D252–H255. The disordered stretch occupies residues G858–K884. Residues S872–V882 show a composition bias toward polar residues. Residue T874 is modified to Phosphothreonine.

Belongs to the helicase family. RAD3/XPD subfamily.

It is found in the nucleus. The enzyme catalyses ATP + H2O = ADP + phosphate + H(+). In terms of biological role, a probable ATP-dependent DNA helicase implicated in DNA repair and the maintenance of genomic stability. Acts as an anti-recombinase to counteract toxic recombination and limit crossover during meiosis. Regulates meiotic recombination and crossover homeostasis by physically dissociating strand invasion events and thereby promotes noncrossover repair by meiotic synthesis dependent strand annealing (SDSA) as well as disassembly of D loop recombination intermediates. This Drosophila yakuba (Fruit fly) protein is Regulator of telomere elongation helicase 1 homolog.